Reading from the N-terminus, the 207-residue chain is Small ribosomal subunit protein uS4 (207 aa).

Residues 31 to 40 (KCRLDNKPGQ) are compositionally biased toward basic and acidic residues. Positions 31-56 (KCRLDNKPGQDGRTSGSRTSDYGNQL) are disordered. Residues 42–53 (GRTSGSRTSDYG) show a composition bias toward polar residues. In terms of domain architecture, S4 RNA-binding spans 97–158 (SRLDNVVYRM…KAKKQARITE (62 aa)).

Belongs to the universal ribosomal protein uS4 family. In terms of assembly, part of the 30S ribosomal subunit. Contacts protein S5. The interaction surface between S4 and S5 is involved in control of translational fidelity.

Its function is as follows. One of the primary rRNA binding proteins, it binds directly to 16S rRNA where it nucleates assembly of the body of the 30S subunit. With S5 and S12 plays an important role in translational accuracy. This Polynucleobacter necessarius subsp. necessarius (strain STIR1) protein is Small ribosomal subunit protein uS4.